A 224-amino-acid polypeptide reads, in one-letter code: Serum amyloid P-component (224 aa).

Residues 1–20 (MDKLLLWMFVFTSLLSEAFC) form the signal peptide. Positions 25 to 224 (KRKVFVFPRE…YVVIRPRVWD (200 aa)) constitute a Pentraxin (PTX) domain. N52 carries N-linked (GlcNAc...) asparagine glycosylation. An intrachain disulfide couples C56 to C115. 6 residues coordinate Ca(2+): D78, N79, E156, Q157, D158, and Q168.

It belongs to the pentraxin family. Homopentamer. Pentraxin (or pentaxin) have a discoid arrangement of 5 non-covalently bound subunits. Ca(2+) serves as cofactor.

The protein localises to the secreted. In Mus musculus (Mouse), this protein is Serum amyloid P-component (Apcs).